The primary structure comprises 570 residues: Sulfite reductase [NADPH] hemoprotein beta-component (570 aa).

Positions 434, 440, 479, and 483 each coordinate [4Fe-4S] cluster. Residue C483 coordinates siroheme.

It belongs to the nitrite and sulfite reductase 4Fe-4S domain family. As to quaternary structure, alpha(8)-beta(8). The alpha component is a flavoprotein, the beta component is a hemoprotein. Requires siroheme as cofactor. It depends on [4Fe-4S] cluster as a cofactor.

It carries out the reaction hydrogen sulfide + 3 NADP(+) + 3 H2O = sulfite + 3 NADPH + 4 H(+). The protein operates within sulfur metabolism; hydrogen sulfide biosynthesis; hydrogen sulfide from sulfite (NADPH route): step 1/1. In terms of biological role, component of the sulfite reductase complex that catalyzes the 6-electron reduction of sulfite to sulfide. This is one of several activities required for the biosynthesis of L-cysteine from sulfate. This chain is Sulfite reductase [NADPH] hemoprotein beta-component, found in Salmonella gallinarum (strain 287/91 / NCTC 13346).